A 339-amino-acid polypeptide reads, in one-letter code: GATA transcription factor 5 (339 aa).

4 disordered regions span residues 68–88, 126–145, 163–206, and 221–242; these read MVRVSSEEPNDDGDALRRSSD, EYSGPNLTGTPTEKPAWLTG, PVPA…PSSP, and ERPPFPKKHKKRSAESVFSGEL. The span at 126–136 shows a compositional bias: polar residues; it reads EYSGPNLTGTP. Positions 167 to 174 match the Nuclear localization signal motif; the sequence is KARSKRNR. Residues 181 to 206 show a composition bias toward low complexity; the sequence is SLGSSSSSGPSSSGSTSSSSSGPSSP. The GATA-type zinc-finger motif lies at 245-299; that stretch reads LQPQRKCSHCGVQKTPQWRAGPMGAKTLCNACGVRYKSGRLLPEYRPACSPTFSS. A disordered region spans residues 314–339; that stretch reads RKKEPTSDNETGLNQLVQSPQAVPSF. Positions 321 to 339 are enriched in polar residues; that stretch reads DNETGLNQLVQSPQAVPSF.

It belongs to the type IV zinc-finger family. Class A subfamily.

The protein localises to the nucleus. Its function is as follows. Transcriptional activator that specifically binds 5'-GATA-3' or 5'-GAT-3' motifs within gene promoters. May be involved in the regulation of some light-responsive genes. The protein is GATA transcription factor 5 (GATA5) of Arabidopsis thaliana (Mouse-ear cress).